Reading from the N-terminus, the 733-residue chain is MLFLILLCVTGAQAITTPAPPRPATTTPRRGVTSAPLIVPASSSELIVTLDGTFHSVTIDMTEIRQYVRQEIIEALWNASHVFESLETTYNRYKDVYRFTDQSIRVNTRGKLSTCKEVNKSTEVSFYKSITSQTINGKYDGDLGISNHQLGQQLFFYVMNVFPVENAFYPVRKHVVYSSLSLADGAYQLAGMATTNYVSLVVVRKISSTVTHEATIVFGNKKLLPSMRGSITKYDISLVNSDAEELLLLTSQKDYEYFSKNLFPQNWTDVFSLITSHTVGELAQILQTSVVDFARKGRCRSVHFNSHFLTTYLAVLSLYYKMGTEFVSKNERQISLQCILPKLYEANVCFDMVHRCFTSQYTRGFDSDGINRLSAAILGSMPFEPNQGLSVPTNWFLQTLYFVDGNLDPQNKGLHGITLILMDIYGRYVVNFTLTPEDRETLFYVYNALRGRKHLSTTMKNKYVSLIYCYTTSMCSATELAWGIEYWGEESTHSAHHSFSPCFMSLRFDYTLEKLNIEGSQDVKLTQTQLSNGVSAMYSLLTAKSSTWTIDSLSIKPCIYNASFVKMIVPFTNVSYVISQGVAAPGTTYDVAETFLKSSMVITVVSNSECYNLTASKEILKIPVVYNMTHPRIKCQLCDSVVISYDEYDGLQTMVYISNYKVQQDLFSDYSIFFDFNNMHTHYLLLMNNGTLFEIRGLYANRAMNIIIILLFTIAALAGVFIVYKIVMYMTFK.

The first 14 residues, 1–14 (MLFLILLCVTGAQA), serve as a signal peptide directing secretion. The Virion surface portion of the chain corresponds to 15 to 707 (ITTPAPPRPA…LYANRAMNII (693 aa)). Asn78 and Asn119 each carry an N-linked (GlcNAc...) asparagine; by host glycan. The interval 185–249 (GAYQLAGMAT…NSDAEELLLL (65 aa)) is interaction with gL. 7 N-linked (GlcNAc...) asparagine; by host glycosylation sites follow: Asn266, Asn431, Asn561, Asn573, Asn612, Asn627, and Asn689. Residues 708 to 728 (IILLFTIAALAGVFIVYKIVM) traverse the membrane as a helical segment. Over 729 to 733 (YMTFK) the chain is Intravirion.

This sequence belongs to the herpesviridae glycoprotein H family. In terms of assembly, interacts with glycoprotein L (gL); this interaction is necessary for the correct processing and cell surface expression of gH. The heterodimer gH/gL seems to interact with gB trimers during fusion. Post-translationally, N-glycosylated, O-glycosylated, and sialylated.

Its subcellular location is the virion membrane. It localises to the host cell membrane. It is found in the host endosome membrane. The heterodimer glycoprotein H-glycoprotein L is required for the fusion of viral and plasma membranes leading to virus entry into the host cell. Following initial binding to host receptor, membrane fusion is mediated by the fusion machinery composed of gB and the heterodimer gH/gL. May also be involved in the fusion between the virion envelope and the outer nuclear membrane during virion morphogenesis. This is Envelope glycoprotein H from Alcelaphine herpesvirus 1 (strain C500) (AlHV-1).